Here is a 228-residue protein sequence, read N- to C-terminus: Large ribosomal subunit protein uL4 (228 aa).

Disordered stretches follow at residues 45–102 and 208–228; these read GRQG…SQRT and PAKG…EANQ. Positions 208–221 are enriched in low complexity; sequence PAKGKTAKAAATSG.

This sequence belongs to the universal ribosomal protein uL4 family. As to quaternary structure, part of the 50S ribosomal subunit.

In terms of biological role, one of the primary rRNA binding proteins, this protein initially binds near the 5'-end of the 23S rRNA. It is important during the early stages of 50S assembly. It makes multiple contacts with different domains of the 23S rRNA in the assembled 50S subunit and ribosome. Forms part of the polypeptide exit tunnel. The polypeptide is Large ribosomal subunit protein uL4 (Saccharopolyspora erythraea (strain ATCC 11635 / DSM 40517 / JCM 4748 / NBRC 13426 / NCIMB 8594 / NRRL 2338)).